A 254-amino-acid polypeptide reads, in one-letter code: MQIVCHQVPVLAGSATLATMGTLILCLGKPASYGKHTESVSSGVPFLPARIAWFLQELPSFVVSVGMLAWQPRSLFGPPGNVLLALFSAHYFHRTFIYSLLTRGRPFPAVLFLRATAFCIGNGLLQAYYLVYCAEYPEEWYTDVRFSFGVFLFILGMGINIHSDYTLRQLRKPGEVIYRIPRGGLFTYVSGANFLGEIIEWIGYALATWSVPAFAFAFFTLCFLGMQAFYHHRFYLKMFKDYPKSRKALIPFIF.

4 helical membrane passes run 8–28 (VPVLAGSATLATMGTLILCLG), 72–92 (PRSLFGPPGNVLLALFSAHYF), 146–166 (FSFGVFLFILGMGINIHSDYT), and 206–226 (LATWSVPAFAFAFFTLCFLGM).

The protein belongs to the steroid 5-alpha reductase family. As to expression, expressed in high levels in the prostate and many other androgen-sensitive tissues.

The protein resides in the microsome membrane. It localises to the endoplasmic reticulum membrane. It catalyses the reaction a 3-oxo-5alpha-steroid + NADP(+) = a 3-oxo-Delta(4)-steroid + NADPH + H(+). The catalysed reaction is 17beta-hydroxy-5alpha-androstan-3-one + NADP(+) = testosterone + NADPH + H(+). The enzyme catalyses 5alpha-pregnane-3,20-dione + NADP(+) = progesterone + NADPH + H(+). Converts testosterone (T) into 5-alpha-dihydrotestosterone (DHT) and progesterone or corticosterone into their corresponding 5-alpha-3-oxosteroids. It plays a central role in sexual differentiation and androgen physiology. This Rattus norvegicus (Rat) protein is 3-oxo-5-alpha-steroid 4-dehydrogenase 2 (Srd5a2).